The primary structure comprises 570 residues: Grayanic acid biosynthesis cluster cytochrome P450 monooxygenase (570 aa).

The chain crosses the membrane as a helical span at residues 9-29 (ILTIFWLPIAAAXLYGAGLAI). The N-linked (GlcNAc...) asparagine glycan is linked to N191. A heme-binding site is contributed by C510.

It belongs to the cytochrome P450 family. Requires heme as cofactor.

It localises to the membrane. The protein operates within secondary metabolite biosynthesis. Functionally, non-reducing polyketide synthase; part of the gene cluster that mediates the biosynthesis of orcinol depsidone grayanic acid (GRA), the only major secondary metabolite known in C.grayi. The first step consists in the ring and depside synthesis by PKS16 leading to 4-O-demethylsphaerophorin, involving different orcinol-like rings, one with acetyl CoA and the other with octanoyl CoA as the starter. Further depsidone formation by the GRA cluster-specific cytochrome P450 leads to 4-O-demethylgrayanic acid. Finally, the cluster specific O-methyltransferase probably converts the 4-O-demethylgrayanic acid into grayanic acid. The sequence is that of Grayanic acid biosynthesis cluster cytochrome P450 monooxygenase from Cladonia grayi (Gray's cup lichen).